The following is a 158-amino-acid chain: Cyclic pyranopterin monophosphate synthase (158 aa).

Substrate-binding positions include 76-78 (MCH) and 114-115 (ME). Residue Asp-129 is part of the active site.

Belongs to the MoaC family. As to quaternary structure, homohexamer; trimer of dimers.

The catalysed reaction is (8S)-3',8-cyclo-7,8-dihydroguanosine 5'-triphosphate = cyclic pyranopterin phosphate + diphosphate. It participates in cofactor biosynthesis; molybdopterin biosynthesis. Its function is as follows. Catalyzes the conversion of (8S)-3',8-cyclo-7,8-dihydroguanosine 5'-triphosphate to cyclic pyranopterin monophosphate (cPMP). In Clostridium perfringens (strain SM101 / Type A), this protein is Cyclic pyranopterin monophosphate synthase.